The chain runs to 262 residues: Type III pantothenate kinase (262 aa).

6 to 13 (DVGNTNAV) is a binding site for ATP. Substrate-binding positions include Tyr100 and 107–110 (GADR). Asp109 serves as the catalytic Proton acceptor. Asp129 lines the K(+) pocket. Thr132 is an ATP binding site. Thr184 provides a ligand contact to substrate.

This sequence belongs to the type III pantothenate kinase family. In terms of assembly, homodimer. It depends on NH4(+) as a cofactor. K(+) serves as cofactor.

The protein localises to the cytoplasm. It carries out the reaction (R)-pantothenate + ATP = (R)-4'-phosphopantothenate + ADP + H(+). Its pathway is cofactor biosynthesis; coenzyme A biosynthesis; CoA from (R)-pantothenate: step 1/5. Functionally, catalyzes the phosphorylation of pantothenate (Pan), the first step in CoA biosynthesis. This is Type III pantothenate kinase from Bacillus cytotoxicus (strain DSM 22905 / CIP 110041 / 391-98 / NVH 391-98).